A 62-amino-acid polypeptide reads, in one-letter code: UPF0339 protein Atu5359 (62 aa).

It belongs to the UPF0339 family.

The polypeptide is UPF0339 protein Atu5359 (Agrobacterium fabrum (strain C58 / ATCC 33970) (Agrobacterium tumefaciens (strain C58))).